Consider the following 89-residue polypeptide: Small ribosomal subunit protein uS15 (89 aa).

It belongs to the universal ribosomal protein uS15 family. In terms of assembly, part of the 30S ribosomal subunit. Forms a bridge to the 50S subunit in the 70S ribosome, contacting the 23S rRNA.

In terms of biological role, one of the primary rRNA binding proteins, it binds directly to 16S rRNA where it helps nucleate assembly of the platform of the 30S subunit by binding and bridging several RNA helices of the 16S rRNA. Forms an intersubunit bridge (bridge B4) with the 23S rRNA of the 50S subunit in the ribosome. This is Small ribosomal subunit protein uS15 from Paracoccus denitrificans (strain Pd 1222).